We begin with the raw amino-acid sequence, 372 residues long: N-methyl-L-tryptophan oxidase (372 aa).

Residue 4–34 (DLIIIGSGSVGAAAGYYATRAGLNVLMTDAH) participates in FAD binding. C308 carries the post-translational modification S-8alpha-FAD cysteine.

Belongs to the MSOX/MTOX family. MTOX subfamily. Monomer. FAD serves as cofactor.

It catalyses the reaction N(alpha)-methyl-L-tryptophan + O2 + H2O = L-tryptophan + formaldehyde + H2O2. Its function is as follows. Catalyzes the oxidative demethylation of N-methyl-L-tryptophan. This chain is N-methyl-L-tryptophan oxidase, found in Escherichia coli (strain K12 / DH10B).